The following is a 279-amino-acid chain: Putative pyruvate, phosphate dikinase regulatory protein (279 aa).

Position 152–159 (Gly152–Ser159) interacts with ADP.

Belongs to the pyruvate, phosphate/water dikinase regulatory protein family. PDRP subfamily.

It catalyses the reaction N(tele)-phospho-L-histidyl/L-threonyl-[pyruvate, phosphate dikinase] + ADP = N(tele)-phospho-L-histidyl/O-phospho-L-threonyl-[pyruvate, phosphate dikinase] + AMP + H(+). The catalysed reaction is N(tele)-phospho-L-histidyl/O-phospho-L-threonyl-[pyruvate, phosphate dikinase] + phosphate + H(+) = N(tele)-phospho-L-histidyl/L-threonyl-[pyruvate, phosphate dikinase] + diphosphate. Its function is as follows. Bifunctional serine/threonine kinase and phosphorylase involved in the regulation of the pyruvate, phosphate dikinase (PPDK) by catalyzing its phosphorylation/dephosphorylation. This chain is Putative pyruvate, phosphate dikinase regulatory protein, found in Anaplasma marginale (strain Florida).